Here is a 386-residue protein sequence, read N- to C-terminus: Diaminopimelate decarboxylase (386 aa).

Lys49 is subject to N6-(pyridoxal phosphate)lysine. Pyridoxal 5'-phosphate-binding positions include Gly228 and 266-269 (ELGR). Residues Arg269, Arg305, Tyr309, Glu335, and Tyr363 each contribute to the substrate site. Tyr363 is a binding site for pyridoxal 5'-phosphate.

Belongs to the Orn/Lys/Arg decarboxylase class-II family. LysA subfamily. Homodimer. Requires pyridoxal 5'-phosphate as cofactor.

The catalysed reaction is meso-2,6-diaminopimelate + H(+) = L-lysine + CO2. The protein operates within amino-acid biosynthesis; L-lysine biosynthesis via DAP pathway; L-lysine from DL-2,6-diaminopimelate: step 1/1. Its function is as follows. Specifically catalyzes the decarboxylation of meso-diaminopimelate (meso-DAP) to L-lysine. This Bacteroides thetaiotaomicron (strain ATCC 29148 / DSM 2079 / JCM 5827 / CCUG 10774 / NCTC 10582 / VPI-5482 / E50) protein is Diaminopimelate decarboxylase.